The sequence spans 180 residues: Cell division protein SepF (180 aa).

A disordered region spans residues 21–40 (LDDDYDDGRAVGRDDRRAMH). Residues 27–40 (DGRAVGRDDRRAMH) are compositionally biased toward basic and acidic residues.

It belongs to the SepF family. Homodimer. Interacts with FtsZ.

The protein resides in the cytoplasm. Functionally, cell division protein that is part of the divisome complex and is recruited early to the Z-ring. Probably stimulates Z-ring formation, perhaps through the cross-linking of FtsZ protofilaments. Its function overlaps with FtsA. The protein is Cell division protein SepF of Frankia casuarinae (strain DSM 45818 / CECT 9043 / HFP020203 / CcI3).